A 251-amino-acid polypeptide reads, in one-letter code: Phosphate import ATP-binding protein PstB (251 aa).

The 242-residue stretch at 5–246 (IEIENFSAYY…PKNRLTEEYL (242 aa)) folds into the ABC transporter domain. 37–44 (GPSGCGKT) contacts ATP.

The protein belongs to the ABC transporter superfamily. Phosphate importer (TC 3.A.1.7) family. The complex is composed of two ATP-binding proteins (PstB), two transmembrane proteins (PstC and PstA) and a solute-binding protein (PstS).

The protein resides in the cell inner membrane. It carries out the reaction phosphate(out) + ATP + H2O = ADP + 2 phosphate(in) + H(+). Part of the ABC transporter complex PstSACB involved in phosphate import. Responsible for energy coupling to the transport system. This Thermotoga maritima (strain ATCC 43589 / DSM 3109 / JCM 10099 / NBRC 100826 / MSB8) protein is Phosphate import ATP-binding protein PstB.